A 130-amino-acid polypeptide reads, in one-letter code: Small ribosomal subunit protein uS8 (130 aa).

Belongs to the universal ribosomal protein uS8 family. As to quaternary structure, part of the 30S ribosomal subunit.

In terms of biological role, one of the primary rRNA binding proteins, it binds directly to 16S rRNA central domain where it helps coordinate assembly of the platform of the 30S subunit. The polypeptide is Small ribosomal subunit protein uS8 (Thermococcus onnurineus (strain NA1)).